Here is a 720-residue protein sequence, read N- to C-terminus: GTPase-activating protein gyp2 (720 aa).

The 66-residue stretch at 20-85 (LDPASFFRIN…AAVRKLEREN (66 aa)) folds into the GRAM domain. Positions 216–404 (GIPNNLRADI…RILDCLFVNG (189 aa)) constitute a Rab-GAP TBC domain.

Its subcellular location is the cytoplasm. The protein localises to the nucleus. Its function is as follows. Stimulates specifically the GTPase activity of ypt2 and ryh1. Inactivates ryh1 during recycling between the endosome and the Golgi compartments. This Schizosaccharomyces pombe (strain 972 / ATCC 24843) (Fission yeast) protein is GTPase-activating protein gyp2.